Here is a 141-residue protein sequence, read N- to C-terminus: Hemoglobin subunit alpha (141 aa).

The Globin domain occupies 1–141 (VLSANDKTNV…VSTVLTSKYR (141 aa)). Serine 3 carries the phosphoserine modification. Lysine 7 carries the post-translational modification N6-succinyllysine. At threonine 8 the chain carries Phosphothreonine. Position 11 is an N6-succinyllysine (lysine 11). Lysine 16 is modified (N6-acetyllysine; alternate). Lysine 16 is modified (N6-succinyllysine; alternate). Tyrosine 24 carries the phosphotyrosine modification. A Phosphoserine modification is found at serine 35. Lysine 40 is modified (N6-succinyllysine). A Phosphoserine modification is found at serine 49. An O2-binding site is contributed by glutamine 58. Histidine 87 provides a ligand contact to heme b. The residue at position 108 (threonine 108) is a Phosphothreonine. Serine 124 and serine 131 each carry phosphoserine. Phosphothreonine occurs at positions 134 and 137. Residue serine 138 is modified to Phosphoserine.

Belongs to the globin family. In terms of assembly, heterotetramer of two alpha chains and two beta chains. In terms of tissue distribution, red blood cells.

Functionally, involved in oxygen transport from the lung to the various peripheral tissues. Hemopressin acts as an antagonist peptide of the cannabinoid receptor CNR1. Hemopressin-binding efficiently blocks cannabinoid receptor CNR1 and subsequent signaling. The sequence is that of Hemoglobin subunit alpha (HBA) from Didelphis virginiana (North American opossum).